Reading from the N-terminus, the 94-residue chain is Co-chaperonin GroES (94 aa).

It belongs to the GroES chaperonin family. Heptamer of 7 subunits arranged in a ring. Interacts with the chaperonin GroEL.

It is found in the cytoplasm. Together with the chaperonin GroEL, plays an essential role in assisting protein folding. The GroEL-GroES system forms a nano-cage that allows encapsulation of the non-native substrate proteins and provides a physical environment optimized to promote and accelerate protein folding. GroES binds to the apical surface of the GroEL ring, thereby capping the opening of the GroEL channel. This chain is Co-chaperonin GroES, found in Lactococcus lactis subsp. lactis (strain IL1403) (Streptococcus lactis).